Consider the following 295-residue polypeptide: Ribosomal protein L11 methyltransferase (295 aa).

The S-adenosyl-L-methionine site is built by threonine 150, glycine 171, aspartate 193, and asparagine 232.

This sequence belongs to the methyltransferase superfamily. PrmA family.

It localises to the cytoplasm. It catalyses the reaction L-lysyl-[protein] + 3 S-adenosyl-L-methionine = N(6),N(6),N(6)-trimethyl-L-lysyl-[protein] + 3 S-adenosyl-L-homocysteine + 3 H(+). In terms of biological role, methylates ribosomal protein L11. In Neisseria meningitidis serogroup B (strain ATCC BAA-335 / MC58), this protein is Ribosomal protein L11 methyltransferase.